The chain runs to 72 residues: Protein LITTLE ZIPPER 4 (72 aa).

Residues tyrosine 14–leucine 44 adopt a coiled-coil conformation. A disordered region spans residues glutamine 42 to glycine 72. Positions asparagine 49–glycine 72 are enriched in low complexity.

Interacts with REV.

In terms of biological role, competitive inhibitor of the HD-ZIPIII transcription factors in shoot apical meristem (SAM) development. Acts by forming non-functional heterodimers. Part of a negative feedback loop. Essential for proper functioning of stem cells in the SAM. The protein is Protein LITTLE ZIPPER 4 of Arabidopsis thaliana (Mouse-ear cress).